Here is a 456-residue protein sequence, read N- to C-terminus: L-2-hydroxyglutarate dehydrogenase, mitochondrial (456 aa).

The N-terminal 20 residues, Met1 to Leu20, are a transit peptide targeting the mitochondrion.

The protein belongs to the L2HGDH family. The cofactor is FAD.

The protein localises to the mitochondrion. It catalyses the reaction (S)-2-hydroxyglutarate + A = 2-oxoglutarate + AH2. The polypeptide is L-2-hydroxyglutarate dehydrogenase, mitochondrial (Nematostella vectensis (Starlet sea anemone)).